The following is a 120-amino-acid chain: Large ribosomal subunit protein bL19c (120 aa).

Belongs to the bacterial ribosomal protein bL19 family.

It localises to the plastid. The protein localises to the chloroplast. This Trieres chinensis (Marine centric diatom) protein is Large ribosomal subunit protein bL19c (rpl19).